The sequence spans 2430 residues: Spatacsin (2430 aa).

2 positions are modified to phosphoserine: S1942 and S1943.

As to quaternary structure, interacts with AP5Z1, AP5B1, AP5S1 and ZFYVE26. As to expression, ubiquitously expressed at low level. Expressed in embryonic and adult cortical projection neurons.

The protein resides in the cytoplasm. It localises to the cytosol. Its subcellular location is the nucleus. The protein localises to the cell projection. It is found in the axon. The protein resides in the dendrite. It localises to the synapse. In terms of biological role, may play a role in neurite plasticity by maintaining cytoskeleton stability and regulating synaptic vesicle transport. In Mus musculus (Mouse), this protein is Spatacsin (Spg11).